The following is a 293-amino-acid chain: Ubiquinone biosynthesis protein COQ9-B, mitochondrial (293 aa).

The disordered stretch occupies residues 21-73 (LRSDDQKQPPFSSSSTHAETPEHAEEQYQQQQSPPRYTDQAGEESEDYESEEQ). Residues 29-38 (PPFSSSSTHA) are compositionally biased toward polar residues. Acidic residues predominate over residues 61–72 (AGEESEDYESEE). Arginine 219 is a binding site for a 1,2-diacylglycero-3-phosphoethanolamine.

Belongs to the COQ9 family. Homodimer. Heterodimer; two heterodimers of COQ7:COQ9 come together on the same side of the lipid pseudo-bilayer and form a curved tetramer with a hydrophobic surface suitable for membrane interaction. These two tetramers assemble into a soluble octamer with a pseudo-bilayer of lipids captured within. Interacts with COQ7; this interaction allows ubiquinone (CoQ) isoprene intermediates presentation to COQ7 and facilitates the COQ7-mediated hydroxylase step.

It localises to the mitochondrion. The protein operates within cofactor biosynthesis; ubiquinone biosynthesis. Functionally, membrane-associated protein that warps the membrane surface to access and bind aromatic isoprenes with high specificity, including ubiquinone (CoQ) isoprene intermediates and presents them directly to COQ7, therefore facilitating the COQ7-mediated hydroxylase step. Participates in the biosynthesis of coenzyme Q, also named ubiquinone, an essential lipid-soluble electron transporter for aerobic cellular respiration. This is Ubiquinone biosynthesis protein COQ9-B, mitochondrial (coq9-b) from Xenopus laevis (African clawed frog).